The following is a 343-amino-acid chain: Selenide, water dikinase (343 aa).

Sec16 is an active-site residue. A non-standard amino acid (selenocysteine) is located at residue Sec16. ATP contacts are provided by residues Lys19 and 46–48; that span reads GAE. Asp49 is a Mg(2+) binding site. ATP is bound by residues Asp66, Asp89, and 137–139; that span reads GHT. Asp89 contacts Mg(2+). Residue Asp225 participates in Mg(2+) binding.

It belongs to the selenophosphate synthase 1 family. Class I subfamily. Homodimer. It depends on Mg(2+) as a cofactor.

The catalysed reaction is hydrogenselenide + ATP + H2O = selenophosphate + AMP + phosphate + 2 H(+). In terms of biological role, synthesizes selenophosphate from selenide and ATP. The chain is Selenide, water dikinase from Citrifermentans bemidjiense (strain ATCC BAA-1014 / DSM 16622 / JCM 12645 / Bem) (Geobacter bemidjiensis).